A 403-amino-acid polypeptide reads, in one-letter code: Enoyl-[acyl-carrier-protein] reductase [NADH] (403 aa).

NAD(+)-binding positions include 49–54, 75–76, 112–113, and 141–142; these read GASSGY, FE, DA, and LA. Tyrosine 227 provides a ligand contact to substrate. Tyrosine 237 acts as the Proton donor in catalysis. Residues lysine 246 and 276–278 contribute to the NAD(+) site; that span reads VVT.

This sequence belongs to the TER reductase family. In terms of assembly, monomer.

The enzyme catalyses a 2,3-saturated acyl-[ACP] + NAD(+) = a (2E)-enoyl-[ACP] + NADH + H(+). It participates in lipid metabolism; fatty acid biosynthesis. Involved in the final reduction of the elongation cycle of fatty acid synthesis (FAS II). Catalyzes the reduction of a carbon-carbon double bond in an enoyl moiety that is covalently linked to an acyl carrier protein (ACP). This is Enoyl-[acyl-carrier-protein] reductase [NADH] from Pseudomonas putida (strain ATCC 47054 / DSM 6125 / CFBP 8728 / NCIMB 11950 / KT2440).